Reading from the N-terminus, the 481-residue chain is Probable zeta-carotene desaturase (481 aa).

This sequence belongs to the zeta carotene desaturase family. Decylplastoquinone serves as cofactor. 6-decylubiquinone is required as a cofactor.

It catalyses the reaction 9,9'-di-cis-zeta-carotene + 2 a quinone = 7,7',9,9'-tetra-cis-lycopene + 2 a quinol. Its pathway is carotenoid biosynthesis; lycopene biosynthesis. In terms of biological role, catalyzes the conversion of zeta-carotene to lycopene via the intermediary of neurosporene. It carries out two consecutive desaturations (introduction of double bonds) at positions C-7 and C-7'. The chain is Probable zeta-carotene desaturase (zds) from Synechococcus elongatus (strain ATCC 33912 / PCC 7942 / FACHB-805) (Anacystis nidulans R2).